A 226-amino-acid chain; its full sequence is UPF0502 protein Daci_5373 (226 aa).

It belongs to the UPF0502 family.

This is UPF0502 protein Daci_5373 from Delftia acidovorans (strain DSM 14801 / SPH-1).